The following is a 118-amino-acid chain: MPFVELDTNLPPQQVPQDLAEKLCSATATILSKPRERVNVTVRTGVSMVVGGSCAPCTQLLVSSIGVVGTAEQNKEHSAKFFQFLTENMGLEQDRILLRFVPLEPWQVGKKATVMTFL.

An N-acetylproline modification is found at proline 2.

This sequence belongs to the MIF family. In terms of assembly, homotrimer.

Its subcellular location is the cytoplasm. The enzyme catalyses D-dopachrome + H(+) = 5,6-dihydroxyindole + CO2. Tautomerization of D-dopachrome with decarboxylation to give 5,6-dihydroxyindole (DHI). This is D-dopachrome decarboxylase (ddt) from Xenopus tropicalis (Western clawed frog).